Here is a 394-residue protein sequence, read N- to C-terminus: MSQFGTTDIVSGSETPPYSGASYQDAQDDNTHPHSSDAGAEKFSAGSGSESHTESSRSDDEDSQAKTKMVDNITILKYILDSLSGRDKLAKIIKYALDILKLFIEKSKRNLTVLDPSVLTYYTKILKNLTVKVALRHPITVIKVLLLSLLRNFDKKIDFISQQLSTFRYILRFGGTPFRVCSFLGKFNKTRKCNFQIDQIKKIWFNEASLREFLDLYYGIFDELDLLYKLKIWTNKSFYSFVSRQESLAWQYDILLSLKDHWLNLQSLQKRQLELEVQLKVQNNALLLSPILMHQAHKDDGSQSPIRKQLLNDLNVNNDAEVLIHKQLKAIKDEKTLVYLDIARLSFDCMANTSDILNLKTPKGTYAVLSLGSGLTGLVKLWITTKRSLCSSKD.

Over residues 1–25 the composition is skewed to polar residues; sequence MSQFGTTDIVSGSETPPYSGASYQD. The disordered stretch occupies residues 1–65; the sequence is MSQFGTTDIV…SRSDDEDSQA (65 aa). The Cytoplasmic segment spans residues 1 to 366; that stretch reads MSQFGTTDIV…LNLKTPKGTY (366 aa). The span at 51–65 shows a compositional bias: basic and acidic residues; sequence SHTESSRSDDEDSQA. Serine 58, serine 63, and serine 289 each carry phosphoserine. The helical transmembrane segment at 367–383 threads the bilayer; the sequence is AVLSLGSGLTGLVKLWI. Residues 384 to 394 lie on the Lumenal side of the membrane; sequence TTKRSLCSSKD.

As to quaternary structure, homooligomer. Interacts with PEX27 and PEX34.

Its subcellular location is the peroxisome membrane. Its function is as follows. Required for regulation of peroxisome size and maintenance. Has a role in the import of peroxisomal matrix proteins. Imports RHO1 into the peroxisome. Also promotes peroxisome division and biogenesis. This is Peroxisomal membrane protein PEX25 (PEX25) from Saccharomyces cerevisiae (strain ATCC 204508 / S288c) (Baker's yeast).